Reading from the N-terminus, the 71-residue chain is Prokaryotic ubiquitin-like protein Pup (71 aa).

The span at 1–18 (MPEKDTGGQHRATRRTEE) shows a compositional bias: basic and acidic residues. The disordered stretch occupies residues 1–36 (MPEKDTGGQHRATRRTEEHDETIDEATATSDVQERR). The segment at 27–65 (TATSDVQERREKLDADVDAILDEIDDVLEENAEEFVRSY) is ARC ATPase binding. A coiled-coil region spans residues 30 to 59 (SDVQERREKLDADVDAILDEIDDVLEENAE). Residue Glu-71 forms an Isoglutamyl lysine isopeptide (Glu-Lys) (interchain with K-? in acceptor proteins) linkage.

It belongs to the prokaryotic ubiquitin-like protein family. Strongly interacts with the proteasome-associated ATPase ARC through a hydrophobic interface; the interacting region of Pup lies in its C-terminal half. There is one Pup binding site per ARC hexamer ring.

The protein operates within protein degradation; proteasomal Pup-dependent pathway. Protein modifier that is covalently attached to lysine residues of substrate proteins, thereby targeting them for proteasomal degradation. The tagging system is termed pupylation. The protein is Prokaryotic ubiquitin-like protein Pup of Acidothermus cellulolyticus (strain ATCC 43068 / DSM 8971 / 11B).